A 204-amino-acid chain; its full sequence is MSNNNKYFTITKKQYKKMRRNKIELLFNVKVLKKKNGRQKFKILHEVENKPKIPIKIIEDQPESPKPLKPPKPPKPPKGPDNPEEPDSPEEPKETDQPGGPDNPNAGNKKMPTPEEYVTRKEFNEFKDSNNQRLTKIENKVDKLEVKVDKLAEIVQTQGEEIKELKVEQKAQSETLQLILKTLQKMNDRLDRMETRLDKIDSPK.

The disordered stretch occupies residues 46-132 (EVENKPKIPI…FNEFKDSNNQ (87 aa)). Residues 64–80 (SPKPLKPPKPPKPPKGP) show a composition bias toward pro residues. The segment covering 117-132 (YVTRKEFNEFKDSNNQ) has biased composition (basic and acidic residues).

Belongs to the UPF0134 family.

This chain is UPF0134 protein MPN_655, found in Mycoplasma pneumoniae (strain ATCC 29342 / M129 / Subtype 1) (Mycoplasmoides pneumoniae).